Here is a 485-residue protein sequence, read N- to C-terminus: Warthog protein 1 (485 aa).

An N-terminal signal peptide occupies residues 1–21; it reads MMVMNPLTATFLAALIGTAAS. The segment at 236 to 258 is disordered; sequence DQRLSPSTDVQSDSYVSPTEADP. Residues 239–252 are compositionally biased toward polar residues; that stretch reads LSPSTDVQSDSYVS.

It belongs to the hedgehog family. Post-translationally, the C-terminal domain displays an autoproteolysis activity.

It is found in the secreted. It localises to the cell surface. The protein resides in the cell membrane. Its subcellular location is the extracellular space. Intercellular signal essential for a variety of patterning events during development. The sequence is that of Warthog protein 1 (wrt-1) from Caenorhabditis elegans.